The following is a 342-amino-acid chain: Predicted GPI-anchored protein 54 (342 aa).

An N-terminal signal peptide occupies residues 1 to 16; sequence MRANYLLLLAATAVQA. 3 N-linked (GlcNAc...) asparagine glycosylation sites follow: Asn-25, Asn-105, and Asn-151. Gly-314 carries GPI-anchor amidated glycine lipidation. A propeptide spans 315–342 (removed in mature form); sequence ASQSHPISSYSNYTISDYAPPISSYYSL. Asn-326 carries an N-linked (GlcNAc...) asparagine glycan.

The protein resides in the cell membrane. In Candida albicans (strain SC5314 / ATCC MYA-2876) (Yeast), this protein is Predicted GPI-anchored protein 54 (PGA54).